Consider the following 280-residue polypeptide: Vitamin B12-binding protein (280 aa).

An N-terminal signal peptide occupies residues 1 to 27 (MMPLGLFPLPRAAVVLLISLLTLPAQA). Positions 30–277 (RVISLSPSTT…QMASIPTPVA (248 aa)) constitute a Fe/B12 periplasmic-binding domain. Position 57 (tyrosine 57) interacts with cyanocob(III)alamin. The cysteines at positions 190 and 266 are disulfide-linked.

The protein belongs to the BtuF family. In terms of assembly, the complex is composed of two ATP-binding proteins (BtuD), two transmembrane proteins (BtuC) and a solute-binding protein (BtuF).

The protein resides in the periplasm. In terms of biological role, part of the ABC transporter complex BtuCDF involved in vitamin B12 import. Binds vitamin B12 and delivers it to the periplasmic surface of BtuC. The polypeptide is Vitamin B12-binding protein (Yersinia pseudotuberculosis serotype O:1b (strain IP 31758)).